Consider the following 198-residue polypeptide: Mitrocomin (198 aa).

A propeptide spanning residues 1 to 8 (MSMGSRYA) is cleaved from the precursor. EF-hand domains follow at residues 19–54 (KWIA…IICK), 118–147 (DALF…AGIQ), and 148–183 (QSRG…FWYS). Ca(2+) contacts are provided by D32, N34, N36, Q38, E43, D125, D127, N129, S131, E136, D161, D163, D165, K167, and E172.

Belongs to the aequorin family.

In terms of biological role, ca(2+)-dependent bioluminescence photoprotein. Displays an emission peak at 470 nm (blue light). Trace amounts of calcium ion trigger the intramolecular oxidation of the chromophore, coelenterazine into coelenteramide and CO(2) with the concomitant emission of light. The chain is Mitrocomin (MI17) from Mitrocoma cellularia (Cross jellyfish).